Consider the following 217-residue polypeptide: External core antigen (217 aa).

The signal sequence occupies residues 1 to 20; the sequence is MYLFHLCLVFACVSCPTVQA. The HBEAG stretch occupies residues 26 to 28; the sequence is GWL. The segment covering 181–210 has biased composition (basic residues); sequence RRGSARVVRSPRRRTPSPRRRRSQSPRRRP. A disordered region spans residues 181 to 217; the sequence is RRGSARVVRSPRRRTPSPRRRRSQSPRRRPQSPASNC. Residues 190–196 form a 1; half-length repeat; it reads SPRRRTP. Residues 190-211 are 3 X 8 AA approximate repeats of S-P-R-R-R-R-[PS]-Q; it reads SPRRRTPSPRRRRSQSPRRRPQ. Residues 190-217 constitute a propeptide that is removed on maturation; it reads SPRRRTPSPRRRRSQSPRRRPQSPASNC. A run of 2 repeats spans residues 197–204 and 205–211.

It belongs to the orthohepadnavirus precore antigen family. Homodimerizes. In terms of processing, phosphorylated. Post-translationally, cleaved by host furin.

It is found in the secreted. Its subcellular location is the host nucleus. May regulate immune response to the intracellular capsid in acting as a T-cell tolerogen, by having an immunoregulatory effect which prevents destruction of infected cells by cytotoxic T-cells. This immune regulation may predispose to chronicity during perinatal infections and prevent severe liver injury during adult infections. The polypeptide is External core antigen (Urocitellus parryii kennicottii (ASHV)).